A 100-amino-acid polypeptide reads, in one-letter code: Nucleoid-associated protein HPG27_32 (100 aa).

It belongs to the YbaB/EbfC family. As to quaternary structure, homodimer.

The protein resides in the cytoplasm. Its subcellular location is the nucleoid. Its function is as follows. Binds to DNA and alters its conformation. May be involved in regulation of gene expression, nucleoid organization and DNA protection. The polypeptide is Nucleoid-associated protein HPG27_32 (Helicobacter pylori (strain G27)).